Reading from the N-terminus, the 297-residue chain is MSYDIIGEIAIIYPPVDDLDKIVNKILKHHKYVKAIYLKTDKLETELRLPKLKLLYGEPILETTYKENKCVFKLRVDKVYFSPRLSTERKEFIDLVKDNEKILIPFAGVNPYPIVIAKHRKVQIKSIELNPWAVKYGIINTKLNKVNVDTILADFGIAWKYIRNLHNKEGIVTKYVNELLKAKPELDLVYTNEEYYDLLNQYYNTKLIEELKPGIEYFDRIIMPLPKGGEHFIFEALVLAKKYIHLYSFAHEKEIEQKVKEIIDIASQLREIKHYDYKIVGDIGVRKYRIRINIYLI.

Residues arginine 89, phenylalanine 106, and glutamate 128–leucine 129 each bind S-adenosyl-L-methionine.

It belongs to the class I-like SAM-binding methyltransferase superfamily. TRM5/TYW2 family.

It localises to the cytoplasm. The catalysed reaction is guanosine(37) in tRNA + S-adenosyl-L-methionine = N(1)-methylguanosine(37) in tRNA + S-adenosyl-L-homocysteine + H(+). It carries out the reaction 4-demethylwyosine(37) in tRNA(Phe) + S-adenosyl-L-methionine = isowyosine(37) in tRNA(Phe) + S-adenosyl-L-homocysteine + H(+). Functionally, catalyzes both the N1-methylation of guanosine and the C7-methylation of 4-demethylwyosine (imG-14) at position 37 in tRNA(Phe). The protein is tRNA (guanine(37)-N(1))/4-demethylwyosine(37)-methyltransferase Taw22 of Nanoarchaeum equitans (strain Kin4-M).